The primary structure comprises 213 residues: Ribosomal RNA small subunit methyltransferase G (213 aa).

S-adenosyl-L-methionine contacts are provided by residues G83, L88, 132-133 (IE), and R146.

This sequence belongs to the methyltransferase superfamily. RNA methyltransferase RsmG family.

It is found in the cytoplasm. The enzyme catalyses guanosine(527) in 16S rRNA + S-adenosyl-L-methionine = N(7)-methylguanosine(527) in 16S rRNA + S-adenosyl-L-homocysteine. Functionally, specifically methylates the N7 position of guanine in position 527 of 16S rRNA. This is Ribosomal RNA small subunit methyltransferase G from Granulibacter bethesdensis (strain ATCC BAA-1260 / CGDNIH1).